The sequence spans 274 residues: MSQIKPSRLSSSAEIRGARQLDVLQRHKLAEPQQDWLAEEVPVALVYNGISHVVMMATPKDLAAFALGFSLSEGIISSPQDIYAIEMTPGCNGIEVNIELSSRRFAGLKERRRAMAGRTGCGVCGIEQLDDIFRPITPLPFTQAFNLEHLDTALAQLKQVQPVGQLTGCTHAAAWINPEGELLGGCEDVGRHVALDKLLGIRAKQPWQQGAVLVSSRASYEMVQKTAMCGAEILFAVSAATTLAVEVAERCNLTLVGFSKPGRATVYTHPQRIK.

C121 functions as the Cysteine persulfide intermediate in the catalytic mechanism. 258 to 263 (FSKPGR) contributes to the Mo-bis(molybdopterin guanine dinucleotide) binding site.

The protein belongs to the FdhD family.

Its subcellular location is the cytoplasm. Its function is as follows. Required for formate dehydrogenase (FDH) activity. Acts as a sulfur carrier protein that transfers sulfur from IscS to the molybdenum cofactor prior to its insertion into FDH. This is Sulfur carrier protein FdhD from Yersinia pseudotuberculosis serotype IB (strain PB1/+).